Consider the following 213-residue polypeptide: Gas vesicle protein F (213 aa).

The protein belongs to the gas vesicle GvpF/GvpL family. As to quaternary structure, binds GvpA.

Its subcellular location is the gas vesicle. A minor component of the gas vesicle, may be involved in preventing GvpA aggregation during gas vesicle nucleation. Gas vesicles are hollow, gas filled proteinaceous nanostructures found in some microorganisms. They allow positioning of halobacteria at the optimal depth for growth in the poorly aerated, shallow brine pools of their habitat. In terms of biological role, expression of a 9.5 kb mc-vac DNA fragment containing 2 divergently transcribed regions (gvpD-gvpE-gvpF-gvpG-gvpH-gvpI-gvpJ-gvpK-gvpL-gvpM and gvpA-gvpC-gvpN-gvpO) allows H.volcanii to produce gas vesicles. The polypeptide is Gas vesicle protein F (Haloferax mediterranei (strain ATCC 33500 / DSM 1411 / JCM 8866 / NBRC 14739 / NCIMB 2177 / R-4) (Halobacterium mediterranei)).